The following is a 230-amino-acid chain: Ribonuclease 3 (230 aa).

Positions isoleucine 8–asparagine 135 constitute an RNase III domain. Glutamate 48 serves as a coordination point for Mg(2+). Residue aspartate 52 is part of the active site. Aspartate 121 and glutamate 124 together coordinate Mg(2+). Glutamate 124 is an active-site residue. Residues aspartate 161–lysine 230 form the DRBM domain.

Belongs to the ribonuclease III family. In terms of assembly, homodimer. Mg(2+) serves as cofactor.

The protein localises to the cytoplasm. The enzyme catalyses Endonucleolytic cleavage to 5'-phosphomonoester.. Its function is as follows. Digests double-stranded RNA. Involved in the processing of primary rRNA transcript to yield the immediate precursors to the large and small rRNAs (23S and 16S). Processes some mRNAs, and tRNAs when they are encoded in the rRNA operon. Processes pre-crRNA and tracrRNA of type II CRISPR loci if present in the organism. In Natranaerobius thermophilus (strain ATCC BAA-1301 / DSM 18059 / JW/NM-WN-LF), this protein is Ribonuclease 3.